The primary structure comprises 327 residues: Malate dehydrogenase (327 aa).

12 to 18 serves as a coordination point for NAD(+); that stretch reads GAAGQIA. Residues R93 and R99 each contribute to the substrate site. Residues N106, Q113, and 130–132 contribute to the NAD(+) site; that span reads VGN. The substrate site is built by N132 and R163. The active-site Proton acceptor is the H188.

Belongs to the LDH/MDH superfamily. MDH type 2 family.

The enzyme catalyses (S)-malate + NAD(+) = oxaloacetate + NADH + H(+). In terms of biological role, catalyzes the reversible oxidation of malate to oxaloacetate. The polypeptide is Malate dehydrogenase (Burkholderia mallei (strain NCTC 10247)).